The following is a 131-amino-acid chain: DNA-directed RNA polymerase subunit omega (131 aa).

The protein belongs to the RNA polymerase subunit omega family. The RNAP catalytic core consists of 2 alpha, 1 beta, 1 beta' and 1 omega subunit. When a sigma factor is associated with the core the holoenzyme is formed, which can initiate transcription.

The catalysed reaction is RNA(n) + a ribonucleoside 5'-triphosphate = RNA(n+1) + diphosphate. In terms of biological role, promotes RNA polymerase assembly. Latches the N- and C-terminal regions of the beta' subunit thereby facilitating its interaction with the beta and alpha subunits. This Chelativorans sp. (strain BNC1) protein is DNA-directed RNA polymerase subunit omega.